Here is a 61-residue protein sequence, read N- to C-terminus: Large ribosomal subunit protein bL32 (61 aa).

A compositionally biased stretch (basic residues) spans 1 to 16 (MAVPKKKTSKSRKNMR). Positions 1 to 20 (MAVPKKKTSKSRKNMRRAHD) are disordered.

Belongs to the bacterial ribosomal protein bL32 family.

This is Large ribosomal subunit protein bL32 from Trichlorobacter lovleyi (strain ATCC BAA-1151 / DSM 17278 / SZ) (Geobacter lovleyi).